The following is a 202-amino-acid chain: Solute carrier family 66 member 3 (202 aa).

Residues methionine 1–alanine 19 form the signal peptide. A run of 4 helical transmembrane segments spans residues serine 33 to leucine 53, leucine 64 to phenylalanine 84, isoleucine 97 to alanine 117, and phenylalanine 171 to valine 191.

It localises to the membrane. The chain is Solute carrier family 66 member 3 from Homo sapiens (Human).